The sequence spans 270 residues: 4-hydroxy-tetrahydrodipicolinate reductase (270 aa).

NAD(+) is bound by residues 11–16 (GASGRM) and E37. R38 is an NADP(+) binding site. NAD(+) contacts are provided by residues 101–103 (GTT) and 125–128 (SPNM). Residue H158 is the Proton donor/acceptor of the active site. H159 lines the (S)-2,3,4,5-tetrahydrodipicolinate pocket. K162 functions as the Proton donor in the catalytic mechanism. 168 to 169 (GT) is a (S)-2,3,4,5-tetrahydrodipicolinate binding site.

The protein belongs to the DapB family.

It localises to the cytoplasm. It catalyses the reaction (S)-2,3,4,5-tetrahydrodipicolinate + NAD(+) + H2O = (2S,4S)-4-hydroxy-2,3,4,5-tetrahydrodipicolinate + NADH + H(+). It carries out the reaction (S)-2,3,4,5-tetrahydrodipicolinate + NADP(+) + H2O = (2S,4S)-4-hydroxy-2,3,4,5-tetrahydrodipicolinate + NADPH + H(+). It participates in amino-acid biosynthesis; L-lysine biosynthesis via DAP pathway; (S)-tetrahydrodipicolinate from L-aspartate: step 4/4. Its function is as follows. Catalyzes the conversion of 4-hydroxy-tetrahydrodipicolinate (HTPA) to tetrahydrodipicolinate. The sequence is that of 4-hydroxy-tetrahydrodipicolinate reductase from Shewanella denitrificans (strain OS217 / ATCC BAA-1090 / DSM 15013).